Reading from the N-terminus, the 419-residue chain is L-rhamnose isomerase (419 aa).

Residues His-262, Asp-294, and Asp-296 each contribute to the Mn(2+) site.

The protein belongs to the rhamnose isomerase family. In terms of assembly, homotetramer. Mn(2+) is required as a cofactor.

The protein resides in the cytoplasm. It carries out the reaction L-rhamnopyranose = L-rhamnulose. The protein operates within carbohydrate degradation; L-rhamnose degradation; glycerone phosphate from L-rhamnose: step 1/3. Its function is as follows. Catalyzes the interconversion of L-rhamnose and L-rhamnulose. This chain is L-rhamnose isomerase, found in Escherichia coli O157:H7.